Here is a 483-residue protein sequence, read N- to C-terminus: Aspartyl/glutamyl-tRNA(Asn/Gln) amidotransferase subunit B (483 aa).

Belongs to the GatB/GatE family. GatB subfamily. In terms of assembly, heterotrimer of A, B and C subunits.

It catalyses the reaction L-glutamyl-tRNA(Gln) + L-glutamine + ATP + H2O = L-glutaminyl-tRNA(Gln) + L-glutamate + ADP + phosphate + H(+). It carries out the reaction L-aspartyl-tRNA(Asn) + L-glutamine + ATP + H2O = L-asparaginyl-tRNA(Asn) + L-glutamate + ADP + phosphate + 2 H(+). Functionally, allows the formation of correctly charged Asn-tRNA(Asn) or Gln-tRNA(Gln) through the transamidation of misacylated Asp-tRNA(Asn) or Glu-tRNA(Gln) in organisms which lack either or both of asparaginyl-tRNA or glutaminyl-tRNA synthetases. The reaction takes place in the presence of glutamine and ATP through an activated phospho-Asp-tRNA(Asn) or phospho-Glu-tRNA(Gln). In Thermomicrobium roseum (strain ATCC 27502 / DSM 5159 / P-2), this protein is Aspartyl/glutamyl-tRNA(Asn/Gln) amidotransferase subunit B.